A 172-amino-acid polypeptide reads, in one-letter code: Adenine phosphoribosyltransferase (172 aa).

It belongs to the purine/pyrimidine phosphoribosyltransferase family. As to quaternary structure, homodimer.

It is found in the cytoplasm. It catalyses the reaction AMP + diphosphate = 5-phospho-alpha-D-ribose 1-diphosphate + adenine. It participates in purine metabolism; AMP biosynthesis via salvage pathway; AMP from adenine: step 1/1. Catalyzes a salvage reaction resulting in the formation of AMP, that is energically less costly than de novo synthesis. This is Adenine phosphoribosyltransferase from Clostridium botulinum (strain Eklund 17B / Type B).